The primary structure comprises 488 residues: Glutamyl-tRNA(Gln) amidotransferase subunit A (488 aa).

Residues Lys77 and Ser152 each act as charge relay system in the active site. The Acyl-ester intermediate role is filled by Ser176.

Belongs to the amidase family. GatA subfamily. As to quaternary structure, heterotrimer of A, B and C subunits.

It catalyses the reaction L-glutamyl-tRNA(Gln) + L-glutamine + ATP + H2O = L-glutaminyl-tRNA(Gln) + L-glutamate + ADP + phosphate + H(+). Functionally, allows the formation of correctly charged Gln-tRNA(Gln) through the transamidation of misacylated Glu-tRNA(Gln) in organisms which lack glutaminyl-tRNA synthetase. The reaction takes place in the presence of glutamine and ATP through an activated gamma-phospho-Glu-tRNA(Gln). This chain is Glutamyl-tRNA(Gln) amidotransferase subunit A, found in Streptococcus gordonii (strain Challis / ATCC 35105 / BCRC 15272 / CH1 / DL1 / V288).